A 626-amino-acid polypeptide reads, in one-letter code: Threonine--tRNA ligase (626 aa).

Residues 1–144 form an editing domain region; that stretch reads MRMLLIHADY…LSRTIVPEEG (144 aa). Positions 207-506 are catalytic; the sequence is PHVRLMLEHE…QAQGKKPMFP (300 aa). Residues cysteine 299, histidine 351, and histidine 475 each contribute to the Zn(2+) site.

The protein belongs to the class-II aminoacyl-tRNA synthetase family. As to quaternary structure, homodimer. Zn(2+) serves as cofactor.

The protein resides in the cytoplasm. The enzyme catalyses tRNA(Thr) + L-threonine + ATP = L-threonyl-tRNA(Thr) + AMP + diphosphate + H(+). Functionally, catalyzes the attachment of threonine to tRNA(Thr) in a two-step reaction: L-threonine is first activated by ATP to form Thr-AMP and then transferred to the acceptor end of tRNA(Thr). Also edits incorrectly charged L-seryl-tRNA(Thr). The protein is Threonine--tRNA ligase of Thermococcus gammatolerans (strain DSM 15229 / JCM 11827 / EJ3).